The following is a 636-amino-acid chain: Probable potassium transport system protein Kup (636 aa).

The next 12 helical transmembrane spans lie at 22–42, 64–84, 115–135, 150–170, 182–202, 220–240, 261–281, 293–313, 351–371, 383–403, 408–428, and 433–453; these read VGLLVAAVGVVYGDIGTSPLY, ILSLILWSLLWVVSFKYVMFI, LMVICGLIGASLFYGDSMITP, FDGIDHWVVPISLVVLVALFL, LFGPIMVTWFLALGALGVHGI, FFVVHPGIGVAILGAVVLALT, WFILVLPALVLNYFGQGALLL, LLAPGWALLPLVGLATMATVI, IYIGAVNWTLMVGVVLLVIGF, VAVTGTMLITTVLVSAVMLLL, PLLAVPILVGFLLVDGLFFAA, and IAQGGAFPVLAGGVLYLLMST.

Belongs to the HAK/KUP transporter (TC 2.A.72) family.

The protein resides in the cell inner membrane. The enzyme catalyses K(+)(in) + H(+)(in) = K(+)(out) + H(+)(out). In terms of biological role, transport of potassium into the cell. Likely operates as a K(+):H(+) symporter. The polypeptide is Probable potassium transport system protein Kup (Pseudomonas putida (strain ATCC 47054 / DSM 6125 / CFBP 8728 / NCIMB 11950 / KT2440)).